A 290-amino-acid chain; its full sequence is Ribosomal protein L11 methyltransferase (290 aa).

S-adenosyl-L-methionine contacts are provided by threonine 136, glycine 157, aspartate 179, and asparagine 222.

The protein belongs to the methyltransferase superfamily. PrmA family.

It localises to the cytoplasm. The catalysed reaction is L-lysyl-[protein] + 3 S-adenosyl-L-methionine = N(6),N(6),N(6)-trimethyl-L-lysyl-[protein] + 3 S-adenosyl-L-homocysteine + 3 H(+). In terms of biological role, methylates ribosomal protein L11. This chain is Ribosomal protein L11 methyltransferase, found in Porphyromonas gingivalis (strain ATCC BAA-308 / W83).